The following is a 117-amino-acid chain: Large ribosomal subunit protein uL18 (117 aa).

Belongs to the universal ribosomal protein uL18 family. Part of the 50S ribosomal subunit; part of the 5S rRNA/L5/L18/L25 subcomplex. Contacts the 5S and 23S rRNAs.

Functionally, this is one of the proteins that bind and probably mediate the attachment of the 5S RNA into the large ribosomal subunit, where it forms part of the central protuberance. The chain is Large ribosomal subunit protein uL18 from Glaesserella parasuis serovar 5 (strain SH0165) (Haemophilus parasuis).